The chain runs to 320 residues: Mitochondrial glutamate carrier 2 (320 aa).

Solcar repeat units lie at residues 11–97 (LSIS…LRQL), 105–215 (RNLK…LNQL), and 224–313 (ASFT…GIGE). 3 consecutive transmembrane segments (helical) span residues 17 to 37 (LING…IDLA), 66 to 86 (FLGM…EKAI), and 110 to 128 (EMLA…TCPM). Ser-150 carries the phosphoserine modification. 3 helical membrane passes run 190–210 (GLGA…PLFA), 230–250 (FVAG…LDVL), and 293–313 (ALVI…GIGE).

This sequence belongs to the mitochondrial carrier (TC 2.A.29) family.

The protein resides in the mitochondrion inner membrane. It carries out the reaction L-glutamate(in) + H(+)(in) = L-glutamate(out) + H(+)(out). In terms of biological role, responsible for the transport of glutamate from the cytosol into the mitochondrial matrix with the concomitant import of a proton (symport system). The chain is Mitochondrial glutamate carrier 2 (Slc25a18) from Mus musculus (Mouse).